Reading from the N-terminus, the 260-residue chain is Thiazole synthase (260 aa).

The Schiff-base intermediate with DXP role is filled by lysine 96. Residues glycine 157, 183–184 (AG), and 205–206 (AS) contribute to the 1-deoxy-D-xylulose 5-phosphate site.

Belongs to the ThiG family. Homotetramer. Forms heterodimers with either ThiH or ThiS.

It localises to the cytoplasm. The enzyme catalyses [ThiS sulfur-carrier protein]-C-terminal-Gly-aminoethanethioate + 2-iminoacetate + 1-deoxy-D-xylulose 5-phosphate = [ThiS sulfur-carrier protein]-C-terminal Gly-Gly + 2-[(2R,5Z)-2-carboxy-4-methylthiazol-5(2H)-ylidene]ethyl phosphate + 2 H2O + H(+). It participates in cofactor biosynthesis; thiamine diphosphate biosynthesis. Its function is as follows. Catalyzes the rearrangement of 1-deoxy-D-xylulose 5-phosphate (DXP) to produce the thiazole phosphate moiety of thiamine. Sulfur is provided by the thiocarboxylate moiety of the carrier protein ThiS. In vitro, sulfur can be provided by H(2)S. This Corynebacterium glutamicum (strain R) protein is Thiazole synthase.